Here is a 227-residue protein sequence, read N- to C-terminus: Phosphoglycolate phosphatase (227 aa).

The active-site Nucleophile is the Asp11. Mg(2+) contacts are provided by Asp11, Asp13, and Asp176.

This sequence belongs to the HAD-like hydrolase superfamily. CbbY/CbbZ/Gph/YieH family. Mg(2+) is required as a cofactor.

It catalyses the reaction 2-phosphoglycolate + H2O = glycolate + phosphate. It participates in organic acid metabolism; glycolate biosynthesis; glycolate from 2-phosphoglycolate: step 1/1. Functionally, specifically catalyzes the dephosphorylation of 2-phosphoglycolate. Is involved in the dissimilation of the intracellular 2-phosphoglycolate formed during the DNA repair of 3'-phosphoglycolate ends, a major class of DNA lesions induced by oxidative stress. This chain is Phosphoglycolate phosphatase, found in Aliivibrio fischeri (strain ATCC 700601 / ES114) (Vibrio fischeri).